The sequence spans 165 residues: SsrA-binding protein (165 aa).

Residues 141-165 (KLHDKRQEEKRKQADREVKSALARY) are disordered. Basic and acidic residues predominate over residues 145-159 (KRQEEKRKQADREVK).

The protein belongs to the SmpB family.

The protein localises to the cytoplasm. Its function is as follows. Required for rescue of stalled ribosomes mediated by trans-translation. Binds to transfer-messenger RNA (tmRNA), required for stable association of tmRNA with ribosomes. tmRNA and SmpB together mimic tRNA shape, replacing the anticodon stem-loop with SmpB. tmRNA is encoded by the ssrA gene; the 2 termini fold to resemble tRNA(Ala) and it encodes a 'tag peptide', a short internal open reading frame. During trans-translation Ala-aminoacylated tmRNA acts like a tRNA, entering the A-site of stalled ribosomes, displacing the stalled mRNA. The ribosome then switches to translate the ORF on the tmRNA; the nascent peptide is terminated with the 'tag peptide' encoded by the tmRNA and targeted for degradation. The ribosome is freed to recommence translation, which seems to be the essential function of trans-translation. This is SsrA-binding protein from Prochlorococcus marinus (strain MIT 9303).